We begin with the raw amino-acid sequence, 1008 residues long: MEGWQEPPRIPLTQICRVSHTAPVATEIGQLTDTLPLTFDLAEDLVWAGDTNGIVSSYYGETLQPYSRFRAGRGRVTSLVSHDRGLVALTTDALHYSTRGGLTRKHVTDPSLGNNLCMTFTHGPTEFVVGGNPGKLVVVNSERGDVTRVVDSPGMATHMAGSSSCVVWGTENGKLVVGDNNLKELHTFQAHQGPFSDVSVQDNVVMTCGFSAASTGHRIDPLIKVWDLRMMRAMAPISYPLAAFVCQTPDSRTLITSPSGQLEFLDHATQQIKLYQAEVALVNGVKLSPRGHHFVVSDTSGQLQLWSDEPQSSFAEFSAPTAFPTPEQSYPPVSIRDTRYPLGAVGMPYYSDTLLSAMPSSIINVGMPPEEVDEDLEVRQIDFVGHAPNYKQQKRNLAQKYSNQRRTSIAAPKFLSEKEKERARRMEDIEDESFFGDEDTCTEASMSSKKVPRLYRKLEIKYSKFGISDFDFSYYNNHTGLSGLETNPFNPLLQLFRFCSPVFNFALRSVARGTPNRLLNEVGLLFDMMHKARGHVCRASNLMHCYDGIAQTRSLAPEDATNIVLFCRFLLEQIGFEQRQTPALFDSFRQLLGATVITVNTFSCGKMAQAESVWYTLELALGSTFYECLERTLDKELHTRAWCDKCRKYQSLHVSKHVESLPQVLTLSVADGNVDVAKSFLVLDGKVSPAAETDNDAYKLVGFICQIQGNGQVAFIRVGDEWYLFNDFLVTKVSEKEAFMKTPWKRTVMMVYAVGADERFDYDSWKNDMDVSALFEERLVNGNNVSRETTDYGYELIKEVPPPKTLCAIDAEFVVLKNEETEIRSDGTKVVLAPRNLCLARVTLLNEDGHPFINDYIAINEHIVDYLTAFSGIEPGDLDPSISRKPLVSLPTSYRRLWLLLNLGCVFVGHGLANDFRTINMQVPPEQVIDTVDLYYIPSERRKLSLRFLAWCVLGKKVQSGNHDSTEDSHTALLLYKKYQDCAPEEFQVLLLDVYRQGRMCNFKVPEA.

5 WD repeats span residues 29-68, 110-149, 158-198, 200-236, and 277-316; these read GQLT…PYSR, PSLG…VTRV, HMAG…FSDV, VQDN…AMAP, and AEVA…SFAE. The linker stretch occupies residues 314-449; it reads FAEFSAPTAF…TCTEASMSSK (136 aa). In terms of domain architecture, USP spans 450 to 755; that stretch reads KVPRLYRKLE…RTVMMVYAVG (306 aa). The region spanning 808 to 976 is the Exonuclease domain; it reads AIDAEFVVLK…EDSHTALLLY (169 aa). D810, E812, D915, and D968 together coordinate a divalent metal cation.

The protein belongs to the peptidase C19 family. PAN2 subfamily. Forms a heterotrimer with an asymmetric homodimer of the regulatory subunit PAN3 to form the poly(A)-nuclease (PAN) deadenylation complex. The cofactor is a divalent metal cation.

The protein resides in the cytoplasm. It carries out the reaction Exonucleolytic cleavage of poly(A) to 5'-AMP.. With respect to regulation, positively regulated by the regulatory subunit PAN3. Functionally, catalytic subunit of the poly(A)-nuclease (PAN) deadenylation complex, one of two cytoplasmic mRNA deadenylases involved in mRNA turnover. PAN specifically shortens poly(A) tails of RNA and the activity is stimulated by poly(A)-binding protein PAB1. PAN deadenylation is followed by rapid degradation of the shortened mRNA tails by the CCR4-NOT complex. Deadenylated mRNAs are then degraded by two alternative mechanisms, namely exosome-mediated 3'-5' exonucleolytic degradation, or deadenylation-dependent mRNA decaping and subsequent 5'-3' exonucleolytic degradation by XRN1. May also be involved in post-transcriptional maturation of mRNA poly(A) tails. The protein is PAN2-PAN3 deadenylation complex catalytic subunit PAN2 of Yarrowia lipolytica (strain CLIB 122 / E 150) (Yeast).